A 161-amino-acid chain; its full sequence is Ubiquitin-conjugating enzyme 15 (161 aa).

The region spanning 15-161 (IACNRLQKEL…TRWWFHDDKV (147 aa)) is the UBC core domain. Cys99 serves as the catalytic Glycyl thioester intermediate.

It belongs to the ubiquitin-conjugating enzyme family.

The catalysed reaction is S-ubiquitinyl-[E1 ubiquitin-activating enzyme]-L-cysteine + [E2 ubiquitin-conjugating enzyme]-L-cysteine = [E1 ubiquitin-activating enzyme]-L-cysteine + S-ubiquitinyl-[E2 ubiquitin-conjugating enzyme]-L-cysteine.. The protein operates within protein modification; protein ubiquitination. Functionally, accepts the ubiquitin from the E1 complex and catalyzes its covalent attachment to other proteins. The sequence is that of Ubiquitin-conjugating enzyme 15 (UBC15) from Arabidopsis thaliana (Mouse-ear cress).